The sequence spans 639 residues: MSHNFTESYDIIVIGAGHAGVEASLAASRMGCKVLLATINIEMLAFMPCNPSIGGSAKGIVVREVDALGGEMAKNIDKSYIQMKMLNTGKGPAVRALRAQADKEVYSKEMRKTVENQENLTLRQTMINEILVEDGKVIGVKTATHQEYAAKAVIVTTGTALRGEIIIGDLKYSSGPNHSLAAIPLADNLRDLGFEIGRFKTGTPPRVKASSINYDVTEIQPGDEKANHFSYTSRDEDYVKDQVPCWLTYTNAESHEIIQNNLHRAPMFSGIVKGVGPRYCPSIEDKIVRFADKERHQLFLEPEGRDTEEVYVQGLSTSLPEDVQKDLVHSIKGLENAEMMRTGYAIEYDMIMPHQLRATLETKKISGLFTAGQTNGTSGYEEAAGQGIIAGINAALKIQGRPELILKRSDGYIGVMIDDLVTKGTVEPYRLLTSRAEYRLILRHDNADMRLTEMGREIGLVDDERWARFEIKKNQFDNEMKRLESIKLKPVKETNAKVEELGFKPLTDAVTAKEFMRRPEVSYQDVVQFIGPAAEELDEKIIELIETEIKYEGYISKALDQVEKMKRMEEKRIPANIDWDDIDSIATEARQKFKKINPETIGQASRISGVNPADISILMVYLEGKARSISKNKEKQNHV.

Residue 15–20 coordinates FAD; it reads GAGHAG. Residue 276 to 290 coordinates NAD(+); the sequence is GPRYCPSIEDKIVRF.

This sequence belongs to the MnmG family. As to quaternary structure, homodimer. Heterotetramer of two MnmE and two MnmG subunits. The cofactor is FAD.

The protein resides in the cytoplasm. Its function is as follows. NAD-binding protein involved in the addition of a carboxymethylaminomethyl (cmnm) group at the wobble position (U34) of certain tRNAs, forming tRNA-cmnm(5)s(2)U34. The polypeptide is tRNA uridine 5-carboxymethylaminomethyl modification enzyme MnmG (Streptococcus gordonii (strain Challis / ATCC 35105 / BCRC 15272 / CH1 / DL1 / V288)).